The sequence spans 387 residues: Phosphoglycerate kinase (387 aa).

Residues 21–23 (DLN), R36, 59–62 (HLGR), R113, and R146 contribute to the substrate site. ATP-binding positions include K197, E314, and 340–343 (GGDT).

The protein belongs to the phosphoglycerate kinase family. As to quaternary structure, monomer.

The protein localises to the cytoplasm. It carries out the reaction (2R)-3-phosphoglycerate + ATP = (2R)-3-phospho-glyceroyl phosphate + ADP. It functions in the pathway carbohydrate degradation; glycolysis; pyruvate from D-glyceraldehyde 3-phosphate: step 2/5. The protein is Phosphoglycerate kinase of Pectobacterium atrosepticum (strain SCRI 1043 / ATCC BAA-672) (Erwinia carotovora subsp. atroseptica).